Consider the following 122-residue polypeptide: Large ribosomal subunit protein bL19 (122 aa).

Belongs to the bacterial ribosomal protein bL19 family.

This protein is located at the 30S-50S ribosomal subunit interface and may play a role in the structure and function of the aminoacyl-tRNA binding site. This is Large ribosomal subunit protein bL19 from Mycoplasmoides gallisepticum (strain R(low / passage 15 / clone 2)) (Mycoplasma gallisepticum).